An 84-amino-acid polypeptide reads, in one-letter code: Putative antitoxin RelB4 (84 aa).

Functionally, antitoxin component of a type II toxin-antitoxin (TA) system. Its cognate toxin is RelE4 (Potential). The chain is Putative antitoxin RelB4 (relB4) from Methanocaldococcus jannaschii (strain ATCC 43067 / DSM 2661 / JAL-1 / JCM 10045 / NBRC 100440) (Methanococcus jannaschii).